A 354-amino-acid polypeptide reads, in one-letter code: MRVDLFDFELPETSIALRPAEPRDAGRMLVVRPGAPLVDRTVRDLPDALRAGDALVFNDTRVIPARLNGVRTRPGAPGQRTEVMLHLREAPDRWRAFARPAKRLTAGDALRFGDLTATVLEKAEAGEIVLAFDRAGPELDAAIAAEGALPLPPYIAGKRATDARDATDYQTVYARNPGAVAAPTAGLHFSDALLADLDAAGLQRHHVTLHVGAGTFLPVKAEDTDGHRMHAEIGILDAATADALNAARAAGGRIVAVGTTALRLLESAARPDGTLAPFSGPTEIFITPGYRFRAVDALVTNFHLPRSTLFMLVSAFSGLETMRAAYAHAIGAGYRFYSYGDASLLFPGPRADTP.

The protein belongs to the QueA family. As to quaternary structure, monomer.

It localises to the cytoplasm. It catalyses the reaction 7-aminomethyl-7-carbaguanosine(34) in tRNA + S-adenosyl-L-methionine = epoxyqueuosine(34) in tRNA + adenine + L-methionine + 2 H(+). It participates in tRNA modification; tRNA-queuosine biosynthesis. Transfers and isomerizes the ribose moiety from AdoMet to the 7-aminomethyl group of 7-deazaguanine (preQ1-tRNA) to give epoxyqueuosine (oQ-tRNA). The protein is S-adenosylmethionine:tRNA ribosyltransferase-isomerase of Methylobacterium radiotolerans (strain ATCC 27329 / DSM 1819 / JCM 2831 / NBRC 15690 / NCIMB 10815 / 0-1).